A 144-amino-acid polypeptide reads, in one-letter code: Large ribosomal subunit protein uL13 (144 aa).

It belongs to the universal ribosomal protein uL13 family. Part of the 50S ribosomal subunit.

In terms of biological role, this protein is one of the early assembly proteins of the 50S ribosomal subunit, although it is not seen to bind rRNA by itself. It is important during the early stages of 50S assembly. The chain is Large ribosomal subunit protein uL13 from Legionella pneumophila (strain Paris).